The primary structure comprises 495 residues: Lysine--tRNA ligase (495 aa).

Residues E406 and E413 each contribute to the Mg(2+) site.

This sequence belongs to the class-II aminoacyl-tRNA synthetase family. As to quaternary structure, homodimer. Mg(2+) is required as a cofactor.

The protein localises to the cytoplasm. It carries out the reaction tRNA(Lys) + L-lysine + ATP = L-lysyl-tRNA(Lys) + AMP + diphosphate. The sequence is that of Lysine--tRNA ligase from Staphylococcus saprophyticus subsp. saprophyticus (strain ATCC 15305 / DSM 20229 / NCIMB 8711 / NCTC 7292 / S-41).